A 616-amino-acid polypeptide reads, in one-letter code: Secretogranin-2 (616 aa).

Residues Met1–Ala27 form the signal peptide. The propeptide occupies Ala28 to Phe30. 2 disordered regions span residues Gln68–Leu104 and Ala120–Met146. Basic and acidic residues predominate over residues Glu92–Leu104. Polar residues predominate over residues Asn122 to Lys140. Sulfotyrosine is present on Tyr150. Residues Ser173, Ser267, Ser431, Ser531, Ser554, and Ser555 each carry the phosphoserine modification. A compositionally biased stretch (basic and acidic residues) spans Lys255–Arg283. A disordered region spans residues Lys255–Gln290. Residues Glu548–Lys560 show a composition bias toward basic and acidic residues. Residues Glu548–Gln582 form a disordered region.

Belongs to the chromogranin/secretogranin protein family. As to quaternary structure, interacts with Secretogranin III/SCG3.

The protein resides in the secreted. Its function is as follows. Neuroendocrine protein of the granin family that regulates the biogenesis of secretory granules. The sequence is that of Secretogranin-2 (SCG2) from Sus scrofa (Pig).